The primary structure comprises 140 residues: Putative 6-pyruvoyl tetrahydrobiopterin synthase (140 aa).

Residue His19 coordinates Zn(2+). Catalysis depends on Cys38, which acts as the Proton acceptor. The Zn(2+) site is built by His44 and His46. Residues His84 and Glu129 each act as charge relay system in the active site.

The protein belongs to the PTPS family. As to quaternary structure, homohexamer formed of two homotrimers in a head to head fashion. It depends on Zn(2+) as a cofactor.

The catalysed reaction is 7,8-dihydroneopterin 3'-triphosphate = 6-pyruvoyl-5,6,7,8-tetrahydropterin + triphosphate + H(+). The protein operates within cofactor biosynthesis; tetrahydrobiopterin biosynthesis; tetrahydrobiopterin from 7,8-dihydroneopterin triphosphate: step 1/3. Its function is as follows. Involved in the biosynthesis of tetrahydrobiopterin, an essential cofactor of aromatic amino acid hydroxylases. Catalyzes the transformation of 7,8-dihydroneopterin triphosphate into 6-pyruvoyl tetrahydropterin. This chain is Putative 6-pyruvoyl tetrahydrobiopterin synthase (ptps-1), found in Caenorhabditis elegans.